The chain runs to 245 residues: 2,3-bisphosphoglycerate-dependent phosphoglycerate mutase (245 aa).

Residues 8–15, 21–22, arginine 60, 87–90, lysine 98, 114–115, and 183–184 each bind substrate; these read RHGQSLWN, TG, ERHY, RR, and GN. The active-site Tele-phosphohistidine intermediate is histidine 9. Glutamate 87 (proton donor/acceptor) is an active-site residue.

Belongs to the phosphoglycerate mutase family. BPG-dependent PGAM subfamily.

The catalysed reaction is (2R)-2-phosphoglycerate = (2R)-3-phosphoglycerate. It functions in the pathway carbohydrate degradation; glycolysis; pyruvate from D-glyceraldehyde 3-phosphate: step 3/5. Functionally, catalyzes the interconversion of 2-phosphoglycerate and 3-phosphoglycerate. This is 2,3-bisphosphoglycerate-dependent phosphoglycerate mutase from Bacillus cereus (strain ZK / E33L).